The chain runs to 564 residues: uncharacterized protein (564 aa).

The N-terminal stretch at 1–21 is a signal peptide; it reads MRRIGAITALSLPVLLSLLYS. Cys22 carries N-palmitoyl cysteine lipidation. A lipid anchor (S-diacylglycerol cysteine) is attached at Cys22.

The protein localises to the cell membrane. This is an uncharacterized protein from Aquifex aeolicus (strain VF5).